Reading from the N-terminus, the 60-residue chain is Large ribosomal subunit protein uL30 (60 aa).

Belongs to the universal ribosomal protein uL30 family. Part of the 50S ribosomal subunit.

The chain is Large ribosomal subunit protein uL30 from Streptococcus pneumoniae serotype 2 (strain D39 / NCTC 7466).